Reading from the N-terminus, the 447-residue chain is Glutamyl-tRNA(Gln) amidotransferase subunit A (447 aa).

Active-site charge relay system residues include lysine 50 and serine 125. Serine 149 serves as the catalytic Acyl-ester intermediate.

Belongs to the amidase family. GatA subfamily. In terms of assembly, heterotrimer of A, B and C subunits.

It carries out the reaction L-glutamyl-tRNA(Gln) + L-glutamine + ATP + H2O = L-glutaminyl-tRNA(Gln) + L-glutamate + ADP + phosphate + H(+). In terms of biological role, allows the formation of correctly charged Gln-tRNA(Gln) through the transamidation of misacylated Glu-tRNA(Gln) in organisms which lack glutaminyl-tRNA synthetase. The reaction takes place in the presence of glutamine and ATP through an activated gamma-phospho-Glu-tRNA(Gln). This chain is Glutamyl-tRNA(Gln) amidotransferase subunit A, found in Sulfurimonas denitrificans (strain ATCC 33889 / DSM 1251) (Thiomicrospira denitrificans (strain ATCC 33889 / DSM 1251)).